The chain runs to 350 residues: Phenylalanine--tRNA ligase alpha subunit (350 aa).

Position 257 (Glu-257) interacts with Mg(2+).

It belongs to the class-II aminoacyl-tRNA synthetase family. Phe-tRNA synthetase alpha subunit type 1 subfamily. Tetramer of two alpha and two beta subunits. The cofactor is Mg(2+).

Its subcellular location is the cytoplasm. The catalysed reaction is tRNA(Phe) + L-phenylalanine + ATP = L-phenylalanyl-tRNA(Phe) + AMP + diphosphate + H(+). The chain is Phenylalanine--tRNA ligase alpha subunit from Listeria monocytogenes serotype 4a (strain HCC23).